Reading from the N-terminus, the 222-residue chain is Kinetochore protein Spc25 (222 aa).

Residues 51 to 86 (RHQRKVGKLQKVLMERREELDKRVSFIEELDRELEA) adopt a coiled-coil conformation.

This sequence belongs to the SPC25 family. As to quaternary structure, component of the Ndc80 complex, which is composed of Ndc80, Nuf2 and Spc25.

The protein resides in the nucleus. Its subcellular location is the chromosome. It is found in the centromere. The protein localises to the kinetochore. Functionally, acts as a component of the essential kinetochore-associated Ndc80 complex, which is required for chromosome segregation and spindle checkpoint activity during meiosis and mitosis. Required for kinetochore integrity and the organization of stable microtubule binding sites in the outer plate of the kinetochore. Participates in SAC signaling that responds specifically to disruptions in spindle microtubule dynamics. The NDC80 complex synergistically enhances the affinity of the SKA1 complex for microtubules and may allow the NDC80 complex to track depolymerizing microtubules. This chain is Kinetochore protein Spc25, found in Drosophila simulans (Fruit fly).